The primary structure comprises 329 residues: GTP 3',8-cyclase (329 aa).

A Radical SAM core domain is found at 8–234; sequence AFARKFYYLR…QLRQRSDGPA (227 aa). Arginine 17 is a binding site for GTP. [4Fe-4S] cluster is bound by residues cysteine 24 and cysteine 28. Tyrosine 30 is a binding site for S-adenosyl-L-methionine. Position 31 (cysteine 31) interacts with [4Fe-4S] cluster. Arginine 68 is a GTP binding site. Glycine 72 contributes to the S-adenosyl-L-methionine binding site. Threonine 99 is a GTP binding site. An S-adenosyl-L-methionine-binding site is contributed by serine 123. Lysine 160 contributes to the GTP binding site. Methionine 194 is an S-adenosyl-L-methionine binding site. [4Fe-4S] cluster contacts are provided by cysteine 257 and cysteine 260. 262–264 contacts GTP; sequence RLR. Position 274 (cysteine 274) interacts with [4Fe-4S] cluster.

This sequence belongs to the radical SAM superfamily. MoaA family. As to quaternary structure, monomer and homodimer. Requires [4Fe-4S] cluster as cofactor.

It carries out the reaction GTP + AH2 + S-adenosyl-L-methionine = (8S)-3',8-cyclo-7,8-dihydroguanosine 5'-triphosphate + 5'-deoxyadenosine + L-methionine + A + H(+). It participates in cofactor biosynthesis; molybdopterin biosynthesis. In terms of biological role, catalyzes the cyclization of GTP to (8S)-3',8-cyclo-7,8-dihydroguanosine 5'-triphosphate. This is GTP 3',8-cyclase from Shigella boydii serotype 18 (strain CDC 3083-94 / BS512).